The primary structure comprises 204 residues: Translation initiation factor 2 subunit beta (204 aa).

The region spanning 146-204 (NLEEGQVLDVEIQSLSKRGDGVVKMGRYIMYVSNAKPGQSVKIKISRISGSIVFTERAE) is the TRAM domain.

This sequence belongs to the eIF-2-beta/eIF-5 family. In terms of assembly, heterotrimer composed of an alpha, a beta and a gamma chain.

Functionally, eIF-2 functions in the early steps of protein synthesis by forming a ternary complex with GTP and initiator tRNA. This chain is Translation initiation factor 2 subunit beta, found in Methanoregula boonei (strain DSM 21154 / JCM 14090 / 6A8).